The primary structure comprises 330 residues: Aspartate--ammonia ligase (330 aa).

The protein belongs to the class-II aminoacyl-tRNA synthetase family. AsnA subfamily.

Its subcellular location is the cytoplasm. It catalyses the reaction L-aspartate + NH4(+) + ATP = L-asparagine + AMP + diphosphate + H(+). Its pathway is amino-acid biosynthesis; L-asparagine biosynthesis; L-asparagine from L-aspartate (ammonia route): step 1/1. This chain is Aspartate--ammonia ligase, found in Escherichia coli O81 (strain ED1a).